We begin with the raw amino-acid sequence, 843 residues long: RNA-binding protein 25 (843 aa).

Residues 1–30 are disordered; it reads MSFPPHLNRPPMGIPALPPGIPPPQFPGFP. Residues 12–30 show a composition bias toward pro residues; that stretch reads MGIPALPPGIPPPQFPGFP. Residues 87–164 form the RRM domain; it reads TTVFVGNISE…KKLLVKVDAK (78 aa). Lysine 135 bears the N6-acetyllysine mark. Disordered regions lie at residues 171–202 and 219–243; these read EWKA…ETKR and SSEL…KKED. Phosphoserine is present on residues serine 226 and serine 229. Glycyl lysine isopeptide (Lys-Gly) (interchain with G-Cter in SUMO2) cross-links involve residues lysine 261, lysine 273, and lysine 430. 2 stretches are compositionally biased toward basic and acidic residues: residues 280–433 and 521–573; these read EISK…KRDR and RLRD…ERRR. 2 disordered regions span residues 280–442 and 498–688; these read EISK…DAYE and EFLE…KRKK. Residues 285–644 form a necessary for nuclear speckle localization region; that stretch reads RDTHKKLEEE…PNTPGDESPC (360 aa). Lysine 578 is covalently cross-linked (Glycyl lysine isopeptide (Lys-Gly) (interchain with G-Cter in SUMO2)). At serine 583 the chain carries Phosphoserine. The segment covering 590-599 has biased composition (basic and acidic residues); that stretch reads KQEKEEKREE. The span at 621–630 shows a compositional bias: low complexity; the sequence is SSAPSVSSAS. Residue lysine 671 forms a Glycyl lysine isopeptide (Lys-Gly) (interchain with G-Cter in SUMO2) linkage. The span at 674–683 shows a compositional bias: polar residues; the sequence is ASNSPGQPNS. A phosphoserine mark is found at serine 677 and serine 683. Glycyl lysine isopeptide (Lys-Gly) (interchain with G-Cter in SUMO2) cross-links involve residues lysine 688 and lysine 697. Serine 703 is subject to Phosphoserine. Lysine 722 is covalently cross-linked (Glycyl lysine isopeptide (Lys-Gly) (interchain with G-Cter in SUMO2)). Positions 750–843 constitute a PWI domain; it reads PELFAYPLDW…TEAKKIGLVK (94 aa).

Interacts with LUC7L3 and SRRM1. Specifically associates with functional splicing complexes, including Sm proteins and U1, U2, U4, U5 and U6 snRNAs. Associates with exon junction complex (EJC) proteins, including APEX1, DDX39B, NCBP1, RBM8A and RNPS1. Interaction with NCBP1 is RNA-dependent. Sumoylated.

It localises to the nucleus speckle. It is found in the cytoplasm. RNA-binding protein that acts as a regulator of alternative pre-mRNA splicing. Involved in apoptotic cell death through the regulation of the apoptotic factor BCL2L1 isoform expression. Modulates the ratio of proapoptotic BCL2L1 isoform S to antiapoptotic BCL2L1 isoform L mRNA expression. When overexpressed, stimulates proapoptotic BCL2L1 isoform S 5'-splice site (5'-ss) selection, whereas its depletion caused the accumulation of antiapoptotic BCL2L1 isoform L. Promotes BCL2L1 isoform S 5'-ss usage through the 5'-CGGGCA-3' RNA sequence. Its association with LUC7L3 promotes U1 snRNP binding to a weak 5' ss in a 5'-CGGGCA-3'-dependent manner. Binds to the exonic splicing enhancer 5'-CGGGCA-3' RNA sequence located within exon 2 of the BCL2L1 pre-mRNA. Also involved in the generation of an abnormal and truncated splice form of SCN5A in heart failure. The chain is RNA-binding protein 25 (RBM25) from Homo sapiens (Human).